A 441-amino-acid chain; its full sequence is Tubulin beta-1 chain (441 aa).

GTP-binding residues include Q11, E69, S138, G142, T143, G144, N204, and N226. Residue E69 coordinates Mg(2+).

The protein belongs to the tubulin family. Dimer of alpha and beta chains. A typical microtubule is a hollow water-filled tube with an outer diameter of 25 nm and an inner diameter of 15 nM. Alpha-beta heterodimers associate head-to-tail to form protofilaments running lengthwise along the microtubule wall with the beta-tubulin subunit facing the microtubule plus end conferring a structural polarity. Microtubules usually have 13 protofilaments but different protofilament numbers can be found in some organisms and specialized cells. Mg(2+) serves as cofactor. As to expression, expressed primarily in touch receptor neurons.

Its subcellular location is the cytoplasm. The protein localises to the cytoskeleton. TTubulin is the major constituent of microtubules, a cylinder consisting of laterally associated linear protofilaments composed of alpha- and beta-tubulin heterodimers. Microtubules grow by the addition of GTP-tubulin dimers to the microtubule end, where a stabilizing cap forms. Below the cap, tubulin dimers are in GDP-bound state, owing to GTPase activity of alpha-tubulin. Plays a role in mechanosensory transduction (touch sensitivity). Functionally, mec-7 beta-tubulin is required for the production of 15-protofilament microtubules. In Caenorhabditis elegans, this protein is Tubulin beta-1 chain (mec-7).